Here is a 463-residue protein sequence, read N- to C-terminus: Argininosuccinate lyase (463 aa).

3 residues coordinate 2-(N(omega)-L-arginino)succinate: Ser-27, Asn-115, and Thr-161. His-162 serves as the catalytic Proton acceptor. Ser-283 (proton donor) is an active-site residue. Asn-291, Tyr-323, Gln-328, and Lys-331 together coordinate 2-(N(omega)-L-arginino)succinate.

The protein belongs to the lyase 1 family. Argininosuccinate lyase subfamily. As to quaternary structure, homotetramer.

The catalysed reaction is 2-(N(omega)-L-arginino)succinate = fumarate + L-arginine. Its pathway is amino-acid biosynthesis; L-arginine biosynthesis; L-arginine from L-ornithine and carbamoyl phosphate: step 3/3. The chain is Argininosuccinate lyase (ARG4) from Saccharomyces paradoxus (Yeast).